A 402-amino-acid chain; its full sequence is 2-pyrone synthase (402 aa).

The acetoacetyl-CoA site is built by Lys60, Arg63, Cys169, Leu272, Arg274, Gly310, Arg312, and Ala313. The active site involves Cys169.

This sequence belongs to the thiolase-like superfamily. Chalcone/stilbene synthases family. In terms of tissue distribution, expressed in both vegetative and reproductive organs. The expression is strong in the leaf, scape (the inflorescence stem) and corolla (both in the ligule and the unpigmented tube), moderate in the bract and carpel, detectable in the root and pappus but not detectable in the stamen.

The catalysed reaction is 2 malonyl-CoA + acetyl-CoA + 2 H(+) = triacetate lactone + 2 CO2 + 3 CoA. Its function is as follows. Polyketide synthase, which uses acetyl-CoA and two condensation reactions with malonyl-CoA to form triacetic acid lactone (also called methylpyrone), a precursor of phytoalexin. May participate in insect and pathogen resistance. This is 2-pyrone synthase from Gerbera hybrida (Daisy).